A 387-amino-acid chain; its full sequence is tRNA-specific 2-thiouridylase MnmA (387 aa).

Residues 6–13 and leucine 32 each bind ATP; that span reads AMSGGVDS. Residue cysteine 101 is the Nucleophile of the active site. A disulfide bridge links cysteine 101 with cysteine 199. Glycine 125 provides a ligand contact to ATP. An interaction with tRNA region spans residues 148-150; that stretch reads KDQ. The active-site Cysteine persulfide intermediate is cysteine 199.

The protein belongs to the MnmA/TRMU family.

It is found in the cytoplasm. It catalyses the reaction S-sulfanyl-L-cysteinyl-[protein] + uridine(34) in tRNA + AH2 + ATP = 2-thiouridine(34) in tRNA + L-cysteinyl-[protein] + A + AMP + diphosphate + H(+). Catalyzes the 2-thiolation of uridine at the wobble position (U34) of tRNA, leading to the formation of s(2)U34. In Clavibacter michiganensis subsp. michiganensis (strain NCPPB 382), this protein is tRNA-specific 2-thiouridylase MnmA.